A 541-amino-acid polypeptide reads, in one-letter code: Chaperonin GroEL (541 aa).

ATP is bound by residues 29–32 (TLGP), 86–90 (DGTTT), Gly413, 476–478 (NAA), and Asp492.

It belongs to the chaperonin (HSP60) family. As to quaternary structure, forms a cylinder of 14 subunits composed of two heptameric rings stacked back-to-back. Interacts with the co-chaperonin GroES.

The protein localises to the cytoplasm. The catalysed reaction is ATP + H2O + a folded polypeptide = ADP + phosphate + an unfolded polypeptide.. Its function is as follows. Together with its co-chaperonin GroES, plays an essential role in assisting protein folding. The GroEL-GroES system forms a nano-cage that allows encapsulation of the non-native substrate proteins and provides a physical environment optimized to promote and accelerate protein folding. The chain is Chaperonin GroEL from Enterococcus faecalis (strain ATCC 700802 / V583).